The sequence spans 607 residues: UvrABC system protein C (607 aa).

Residues 12 to 91 (DSPGVYLYKD…IKRYRPRYNI (80 aa)) enclose the GIY-YIG domain. The 36-residue stretch at 200 to 235 (ENLIKKLKKEMAIASDNLEFERAAKLRDQILALEKI) folds into the UVR domain.

This sequence belongs to the UvrC family. As to quaternary structure, interacts with UvrB in an incision complex.

The protein localises to the cytoplasm. The UvrABC repair system catalyzes the recognition and processing of DNA lesions. UvrC both incises the 5' and 3' sides of the lesion. The N-terminal half is responsible for the 3' incision and the C-terminal half is responsible for the 5' incision. This Carboxydothermus hydrogenoformans (strain ATCC BAA-161 / DSM 6008 / Z-2901) protein is UvrABC system protein C.